Here is a 427-residue protein sequence, read N- to C-terminus: GTPase Obg (427 aa).

Residues 1–158 (MFVDIAKIYV…LWVILELKVL (158 aa)) enclose the Obg domain. Residues 159–330 (ADVGLIGYPN…VLKRAYELLK (172 aa)) form the OBG-type G domain. GTP-binding positions include 165–172 (GYPNVGKS), 190–194 (FTTKY), 212–215 (DIPG), 282–285 (NKMD), and 311–313 (SAA). Mg(2+) is bound by residues Ser-172 and Thr-192. The region spanning 347–427 (FVYYKKKDVK…ILDVEFEYYE (81 aa)) is the OCT domain.

This sequence belongs to the TRAFAC class OBG-HflX-like GTPase superfamily. OBG GTPase family. In terms of assembly, monomer. Requires Mg(2+) as cofactor.

It localises to the cytoplasm. Its function is as follows. An essential GTPase which binds GTP, GDP and possibly (p)ppGpp with moderate affinity, with high nucleotide exchange rates and a fairly low GTP hydrolysis rate. Plays a role in control of the cell cycle, stress response, ribosome biogenesis and in those bacteria that undergo differentiation, in morphogenesis control. The polypeptide is GTPase Obg (Caldicellulosiruptor saccharolyticus (strain ATCC 43494 / DSM 8903 / Tp8T 6331)).